Consider the following 334-residue polypeptide: Mevalonate kinase (334 aa).

Position 110 to 120 (110 to 120 (PVGAGLGSSAA)) interacts with ATP. Catalysis depends on aspartate 161, which acts as the Proton acceptor.

The protein belongs to the GHMP kinase family. Mevalonate kinase subfamily. Homodimer. It depends on Mg(2+) as a cofactor.

Its subcellular location is the cytoplasm. It carries out the reaction (R)-mevalonate + ATP = (R)-5-phosphomevalonate + ADP + H(+). It participates in isoprenoid biosynthesis; isopentenyl diphosphate biosynthesis via mevalonate pathway; isopentenyl diphosphate from (R)-mevalonate: step 1/3. Its function is as follows. Catalyzes the phosphorylation of (R)-mevalonate (MVA) to (R)-mevalonate 5-phosphate (MVAP). Functions in the mevalonate (MVA) pathway leading to isopentenyl diphosphate (IPP), a key precursor for the biosynthesis of isoprenoid compounds such as archaeal membrane lipids. In Thermococcus gammatolerans (strain DSM 15229 / JCM 11827 / EJ3), this protein is Mevalonate kinase.